Reading from the N-terminus, the 201-residue chain is Recombination protein RecR (201 aa).

A C4-type zinc finger spans residues 57–72; it reads CADCRTFTEQEVCNIC. The region spanning 81–176 is the Toprim domain; it reads GQICVVESPA…EASRIAHGVP (96 aa).

This sequence belongs to the RecR family.

Functionally, may play a role in DNA repair. It seems to be involved in an RecBC-independent recombinational process of DNA repair. It may act with RecF and RecO. The protein is Recombination protein RecR of Escherichia coli O6:K15:H31 (strain 536 / UPEC).